The following is a 1042-amino-acid chain: Ubiquitin carboxyl-terminal hydrolase 38 (1042 aa).

The USP domain occupies 445-949; it reads TGLINLGNTC…TAYVLLYKKQ (505 aa). Catalysis depends on Cys-454, which acts as the Nucleophile. His-857 serves as the catalytic Proton acceptor.

Belongs to the peptidase C19 family. Interacts with isoform 1 of FBXW7; this interaction prevents FBXW7-mediated degradation of MYC.

It is found in the cytoplasm. The protein resides in the nucleus. The enzyme catalyses Thiol-dependent hydrolysis of ester, thioester, amide, peptide and isopeptide bonds formed by the C-terminal Gly of ubiquitin (a 76-residue protein attached to proteins as an intracellular targeting signal).. In terms of biological role, deubiquitinating enzyme that plays a role in various cellular processes, including DNA repair, cell cycle regulation, and immune response. Plays a role in the inhibition of type I interferon signaling by mediating the 'Lys-33' to 'Lys-48' ubiquitination transition of TBK1 leading to its degradation. Cleaves the ubiquitin chain from the histone demethylase LSD1/KDM1A and prevents it from degradation by the 26S proteasome, thus maintaining LSD1 protein level in cells. Plays a role in the DNA damage response by regulating the deacetylase activity of HDAC1. Mechanistically, removes the 'Lys-63'-linked ubiquitin chain promoting the deacetylase activity of HDAC1 in response to DNA damage. Also acts as a specific deubiquitinase of histone deacetylase 3/HDAC3 and cleaves its 'Lys-63'-linked ubiquitin chains to lower its histone deacetylase activity. Regulates MYC levels and cell proliferation via antagonizing ubiquitin E3 ligase FBXW7 thereby preventing MYC 'Lys-48'-linked ubiquitination and degradation. Participates in antiviral response by removing both 'Lys-48'-linked and 'Lys-63'-linked polyubiquitination of Zika virus envelope protein E. Constitutively associated with IL-33R/IL1RL1, deconjugates its 'Lys-27'-linked polyubiquitination resulting in its autophagic degradation. The polypeptide is Ubiquitin carboxyl-terminal hydrolase 38 (Usp38) (Mus musculus (Mouse)).